Here is a 710-residue protein sequence, read N- to C-terminus: Ephexin-1 (710 aa).

Residues Met1 to Ser20 show a composition bias toward basic and acidic residues. Residues Met1–Asp146 form a disordered region. Residues Met1–Ile272 form a regulatory region; modulates activity toward RHOA, RAC1 and CDC42 region. Over residues Gln123–Thr137 the composition is skewed to polar residues. Tyr177 is subject to Phosphotyrosine. The disordered stretch occupies residues Arg192 to Arg234. The segment covering Asp211–Leu227 has biased composition (acidic residues). The DH domain maps to Arg273–Gly457. A PH domain is found at Trp489–Arg601. In terms of domain architecture, SH3 spans Leu612 to Asn673. Basic and acidic residues predominate over residues His688–Lys699. The segment at His688 to Gln710 is disordered. A compositionally biased stretch (basic residues) spans Asp700–Gln710.

Interacts with CDK5R1 and EPHA4; activated by EPHA4 through the CDK5 kinase. Post-translationally, src-dependent phosphorylation at Tyr-177 upon EPHA4 activation increases the guanine exchange factor activity toward RHOA. Phosphorylation by CDK5 upon EPHA4 activation by EFNA1 may regulate dendritic spine morphogenesis. Highly expressed in brain and to a lower extent in eye.

The protein localises to the cytoplasm. Its subcellular location is the membrane. The protein resides in the cell projection. It localises to the growth cone. Acts as a guanine nucleotide exchange factor (GEF) which differentially activates the GTPases RHOA, RAC1 and CDC42. Plays a role in axon guidance regulating ephrin-induced growth cone collapse and dendritic spine morphogenesis. Upon activation by ephrin through EPHA4, the GEF activity switches toward RHOA resulting in its activation. Activated RHOA promotes cone retraction at the expense of RAC1- and CDC42-stimulated growth cone extension. The chain is Ephexin-1 (Ngef) from Mus musculus (Mouse).